The primary structure comprises 76 residues: Conotoxin ArMLCL-022 (76 aa).

The first 19 residues, 1 to 19, serve as a signal peptide directing secretion; it reads MLCLPVFIILLLLASTAAS. A propeptide spanning residues 20–52 is cleaved from the precursor; the sequence is NPLETRIQSDLIRAALEDADMKTERGFLGVLMK.

It belongs to the conotoxin T superfamily. In terms of tissue distribution, expressed by the venom duct.

The protein localises to the secreted. In Conus arenatus (Sand-dusted cone), this protein is Conotoxin ArMLCL-022.